We begin with the raw amino-acid sequence, 296 residues long: Small ribosomal subunit biogenesis GTPase RsgA (296 aa).

The CP-type G domain occupies 65 to 223 (INRIGRPAVA…LADTPGFSSI (159 aa)). GTP-binding positions include 114-117 (SKAD) and 166-174 (GQSGAGKST). Zn(2+) contacts are provided by Cys-247, Cys-252, His-254, and Cys-260.

It belongs to the TRAFAC class YlqF/YawG GTPase family. RsgA subfamily. In terms of assembly, monomer. Associates with 30S ribosomal subunit, binds 16S rRNA. The cofactor is Zn(2+).

The protein localises to the cytoplasm. In terms of biological role, one of several proteins that assist in the late maturation steps of the functional core of the 30S ribosomal subunit. Helps release RbfA from mature subunits. May play a role in the assembly of ribosomal proteins into the subunit. Circularly permuted GTPase that catalyzes slow GTP hydrolysis, GTPase activity is stimulated by the 30S ribosomal subunit. This is Small ribosomal subunit biogenesis GTPase RsgA from Lactobacillus acidophilus (strain ATCC 700396 / NCK56 / N2 / NCFM).